The following is a 478-amino-acid chain: Protein nucleotidyltransferase YdiU (478 aa).

8 residues coordinate ATP: glycine 84, glycine 86, arginine 87, lysine 107, aspartate 119, glycine 120, arginine 170, and arginine 177. Aspartate 246 acts as the Proton acceptor in catalysis. Mg(2+) contacts are provided by asparagine 247 and aspartate 256. Aspartate 256 contacts ATP.

It belongs to the SELO family. It depends on Mg(2+) as a cofactor. Requires Mn(2+) as cofactor.

It catalyses the reaction L-seryl-[protein] + ATP = 3-O-(5'-adenylyl)-L-seryl-[protein] + diphosphate. The catalysed reaction is L-threonyl-[protein] + ATP = 3-O-(5'-adenylyl)-L-threonyl-[protein] + diphosphate. The enzyme catalyses L-tyrosyl-[protein] + ATP = O-(5'-adenylyl)-L-tyrosyl-[protein] + diphosphate. It carries out the reaction L-histidyl-[protein] + UTP = N(tele)-(5'-uridylyl)-L-histidyl-[protein] + diphosphate. It catalyses the reaction L-seryl-[protein] + UTP = O-(5'-uridylyl)-L-seryl-[protein] + diphosphate. The catalysed reaction is L-tyrosyl-[protein] + UTP = O-(5'-uridylyl)-L-tyrosyl-[protein] + diphosphate. In terms of biological role, nucleotidyltransferase involved in the post-translational modification of proteins. It can catalyze the addition of adenosine monophosphate (AMP) or uridine monophosphate (UMP) to a protein, resulting in modifications known as AMPylation and UMPylation. The protein is Protein nucleotidyltransferase YdiU of Escherichia coli O157:H7.